The chain runs to 147 residues: D-aminoacyl-tRNA deacylase (147 aa).

Positions 137 to 138 match the Gly-cisPro motif, important for rejection of L-amino acids motif; sequence GP.

Belongs to the DTD family. In terms of assembly, homodimer.

The protein resides in the cytoplasm. It catalyses the reaction glycyl-tRNA(Ala) + H2O = tRNA(Ala) + glycine + H(+). It carries out the reaction a D-aminoacyl-tRNA + H2O = a tRNA + a D-alpha-amino acid + H(+). Its function is as follows. An aminoacyl-tRNA editing enzyme that deacylates mischarged D-aminoacyl-tRNAs. Also deacylates mischarged glycyl-tRNA(Ala), protecting cells against glycine mischarging by AlaRS. Acts via tRNA-based rather than protein-based catalysis; rejects L-amino acids rather than detecting D-amino acids in the active site. By recycling D-aminoacyl-tRNA to D-amino acids and free tRNA molecules, this enzyme counteracts the toxicity associated with the formation of D-aminoacyl-tRNA entities in vivo and helps enforce protein L-homochirality. This is D-aminoacyl-tRNA deacylase from Jannaschia sp. (strain CCS1).